The primary structure comprises 93 residues: MFYLISYDISVDQRRLKIAKLLEGYGQRVLESVFECDLELPAYRQLRQKLNRLIKDEEGDRLRIYRLCASCREQIEIIGDGPPPETSQDIYII.

Residue D8 coordinates Mg(2+).

This sequence belongs to the CRISPR-associated endoribonuclease Cas2 protein family. In terms of assembly, homodimer, forms a heterotetramer with a Cas1 homodimer. Requires Mg(2+) as cofactor.

In terms of biological role, CRISPR (clustered regularly interspaced short palindromic repeat), is an adaptive immune system that provides protection against mobile genetic elements (viruses, transposable elements and conjugative plasmids). CRISPR clusters contain sequences complementary to antecedent mobile elements and target invading nucleic acids. CRISPR clusters are transcribed and processed into CRISPR RNA (crRNA). Functions as a ssRNA-specific endoribonuclease. Involved in the integration of spacer DNA into the CRISPR cassette. In Chloroflexus aurantiacus (strain ATCC 29366 / DSM 635 / J-10-fl), this protein is CRISPR-associated endoribonuclease Cas2 1.